A 50-amino-acid polypeptide reads, in one-letter code: Large ribosomal subunit protein bL33 (50 aa).

This sequence belongs to the bacterial ribosomal protein bL33 family.

This Citrifermentans bemidjiense (strain ATCC BAA-1014 / DSM 16622 / JCM 12645 / Bem) (Geobacter bemidjiensis) protein is Large ribosomal subunit protein bL33.